The following is a 334-amino-acid chain: Ornithine carbamoyltransferase (334 aa).

Carbamoyl phosphate-binding positions include 57 to 60 (STRT), Gln-84, Arg-108, and 135 to 138 (HPTQ). L-ornithine contacts are provided by residues Asn-169, Asp-233, and 237 to 238 (SM). Carbamoyl phosphate contacts are provided by residues 275–276 (CL) and Arg-320.

The protein belongs to the aspartate/ornithine carbamoyltransferase superfamily. OTCase family.

The protein localises to the cytoplasm. The catalysed reaction is carbamoyl phosphate + L-ornithine = L-citrulline + phosphate + H(+). It functions in the pathway amino-acid biosynthesis; L-arginine biosynthesis; L-arginine from L-ornithine and carbamoyl phosphate: step 1/3. In terms of biological role, reversibly catalyzes the transfer of the carbamoyl group from carbamoyl phosphate (CP) to the N(epsilon) atom of ornithine (ORN) to produce L-citrulline. This chain is Ornithine carbamoyltransferase, found in Vibrio vulnificus (strain YJ016).